The primary structure comprises 487 residues: Aspartyl/glutamyl-tRNA(Asn/Gln) amidotransferase subunit B (487 aa).

Belongs to the GatB/GatE family. GatB subfamily. As to quaternary structure, heterotrimer of A, B and C subunits.

The catalysed reaction is L-glutamyl-tRNA(Gln) + L-glutamine + ATP + H2O = L-glutaminyl-tRNA(Gln) + L-glutamate + ADP + phosphate + H(+). It carries out the reaction L-aspartyl-tRNA(Asn) + L-glutamine + ATP + H2O = L-asparaginyl-tRNA(Asn) + L-glutamate + ADP + phosphate + 2 H(+). Its function is as follows. Allows the formation of correctly charged Asn-tRNA(Asn) or Gln-tRNA(Gln) through the transamidation of misacylated Asp-tRNA(Asn) or Glu-tRNA(Gln) in organisms which lack either or both of asparaginyl-tRNA or glutaminyl-tRNA synthetases. The reaction takes place in the presence of glutamine and ATP through an activated phospho-Asp-tRNA(Asn) or phospho-Glu-tRNA(Gln). The sequence is that of Aspartyl/glutamyl-tRNA(Asn/Gln) amidotransferase subunit B from Leptospira biflexa serovar Patoc (strain Patoc 1 / Ames).